The following is a 361-amino-acid chain: 3-isopropylmalate dehydrogenase (361 aa).

Residue 78 to 91 participates in NAD(+) binding; the sequence is GTQWDSLPRHLRPE. Positions 98, 108, 136, and 226 each coordinate substrate. 3 residues coordinate Mg(2+): aspartate 226, aspartate 250, and aspartate 254. Position 284–296 (284–296) interacts with NAD(+); sequence GSAPDIAGQDKAN.

The protein belongs to the isocitrate and isopropylmalate dehydrogenases family. LeuB type 1 subfamily. As to quaternary structure, homodimer. Mg(2+) serves as cofactor. Requires Mn(2+) as cofactor.

It localises to the cytoplasm. It carries out the reaction (2R,3S)-3-isopropylmalate + NAD(+) = 4-methyl-2-oxopentanoate + CO2 + NADH. Its pathway is amino-acid biosynthesis; L-leucine biosynthesis; L-leucine from 3-methyl-2-oxobutanoate: step 3/4. In terms of biological role, catalyzes the oxidation of 3-carboxy-2-hydroxy-4-methylpentanoate (3-isopropylmalate) to 3-carboxy-4-methyl-2-oxopentanoate. The product decarboxylates to 4-methyl-2 oxopentanoate. The sequence is that of 3-isopropylmalate dehydrogenase from Thermosynechococcus vestitus (strain NIES-2133 / IAM M-273 / BP-1).